The following is a 502-amino-acid chain: UPF0371 protein CLK_3516 (502 aa).

This sequence belongs to the UPF0371 family.

This chain is UPF0371 protein CLK_3516, found in Clostridium botulinum (strain Loch Maree / Type A3).